A 156-amino-acid chain; its full sequence is UPF0225 protein PFLU_1319 (156 aa).

It belongs to the UPF0225 family.

This is UPF0225 protein PFLU_1319 from Pseudomonas fluorescens (strain SBW25).